A 334-amino-acid chain; its full sequence is Protein translocase subunit SecF (334 aa).

6 helical membrane passes run 18–38, 144–164, 168–190, 195–217, 258–278, and 279–299; these read VAAG…AVTG, GAAM…AIRF, FGLA…IKIF, SLTV…IIIF, ATLA…WVMA, and FGVV…LLWI.

Belongs to the SecD/SecF family. SecF subfamily. In terms of assembly, forms a complex with SecD. Part of the essential Sec protein translocation apparatus which comprises SecA, SecYEG and auxiliary proteins SecDF. Other proteins may also be involved.

The protein resides in the cell inner membrane. In terms of biological role, part of the Sec protein translocase complex. Interacts with the SecYEG preprotein conducting channel. SecDF uses the proton motive force (PMF) to complete protein translocation after the ATP-dependent function of SecA. The chain is Protein translocase subunit SecF from Gemmatimonas aurantiaca (strain DSM 14586 / JCM 11422 / NBRC 100505 / T-27).